A 144-amino-acid polypeptide reads, in one-letter code: Cytochrome c-type biogenesis protein CcmE (144 aa).

At 1–7 the chain is on the cytoplasmic side; that stretch reads MKPRHKR. The helical; Signal-anchor for type II membrane protein transmembrane segment at 8-28 threads the bilayer; that stretch reads ALMIVAALAVIGIAALLILNA. Residues 29–144 lie on the Extracellular side of the membrane; sequence LNSNIALYVT…EQAQKNGSAK (116 aa). Heme is bound by residues His121 and Tyr125.

It belongs to the CcmE/CycJ family.

The protein resides in the cell membrane. In terms of biological role, heme chaperone required for the biogenesis of c-type cytochromes. Transiently binds heme delivered by CcmC and transfers the heme to apo-cytochromes in a process facilitated by CcmF and CcmH. This chain is Cytochrome c-type biogenesis protein CcmE, found in Polynucleobacter asymbioticus (strain DSM 18221 / CIP 109841 / QLW-P1DMWA-1) (Polynucleobacter necessarius subsp. asymbioticus).